Consider the following 190-residue polypeptide: CD70 antigen (190 aa).

Residues 1-17 are Cytoplasmic-facing; that stretch reads MEEEGSGCNVPRLPWAS. Residues 18-38 form a helical membrane-spanning segment; that stretch reads ILRAALLLLLIGMVIYCFLCG. Residues 39 to 190 are Extracellular-facing; that stretch reads QRFTQQQLDS…TFFGVQLVRP (152 aa). Positions 52-188 constitute a THD domain; sequence DLAELLLNHT…DETFFGVQLV (137 aa). N-linked (GlcNAc...) asparagine glycans are attached at residues asparagine 59 and asparagine 110. Intrachain disulfides connect cysteine 111-cysteine 148 and cysteine 130-cysteine 165. N-linked (GlcNAc...) asparagine glycosylation occurs at asparagine 167.

Belongs to the tumor necrosis factor family. In terms of assembly, homotrimer. N-glycosylated.

It is found in the cell membrane. Functionally, expressed at the plasma membrane of B cells, it is the ligand of the CD27 receptor which is specifically expressed at the surface of T cells. The CD70-CD27 signaling pathway mediates antigen-specific T cell activation and expansion which in turn provides immune surveillance of B cells. The protein is CD70 antigen of Sus scrofa (Pig).